The sequence spans 1182 residues: Receptor-type guanylate cyclase gcy-19 (1182 aa).

The signal sequence occupies residues 1 to 24 (MEYLLFLLLFAGFLTFLPRFLIYA). Residues 25 to 507 (QITSSTTTTT…PQSFVDQYGA (483 aa)) lie on the Extracellular side of the membrane. N-linked (GlcNAc...) asparagine glycosylation is found at Asn-91, Asn-369, Asn-430, and Asn-453. The chain crosses the membrane as a helical span at residues 508 to 528 (LVFAIGGVLIFAMLFVITCFF). Residues 529–1182 (YVMRQKRLER…FRRQETLALI (654 aa)) are Cytoplasmic-facing. The Protein kinase domain occupies 562-849 (RMSKRSLQSG…KGNLMDHVFN (288 aa)). Positions 907–1037 (TVFFSDVVKF…DTVNTASRME (131 aa)) constitute a Guanylate cyclase domain. The tract at residues 1094–1164 (VSSNSGYQSD…EAKARDIHNE (71 aa)) is disordered. Low complexity predominate over residues 1142–1152 (SPTLSKRSVSP).

Belongs to the adenylyl cyclase class-4/guanylyl cyclase family. Expressed in IL2 sensory neurons.

It localises to the cell membrane. It carries out the reaction GTP = 3',5'-cyclic GMP + diphosphate. Guanylate cyclase involved in the production of the second messenger cGMP. This Caenorhabditis elegans protein is Receptor-type guanylate cyclase gcy-19.